Reading from the N-terminus, the 261-residue chain is NAD kinase (261 aa).

Catalysis depends on aspartate 54, which acts as the Proton acceptor. Residues 54 to 55 (DG), 123 to 124 (ND), arginine 150, aspartate 152, and 163 to 168 (TAYSLS) contribute to the NAD(+) site.

It belongs to the NAD kinase family. A divalent metal cation serves as cofactor.

The protein resides in the cytoplasm. It carries out the reaction NAD(+) + ATP = ADP + NADP(+) + H(+). Involved in the regulation of the intracellular balance of NAD and NADP, and is a key enzyme in the biosynthesis of NADP. Catalyzes specifically the phosphorylation on 2'-hydroxyl of the adenosine moiety of NAD to yield NADP. This is NAD kinase from Caldicellulosiruptor bescii (strain ATCC BAA-1888 / DSM 6725 / KCTC 15123 / Z-1320) (Anaerocellum thermophilum).